Consider the following 210-residue polypeptide: Ribosomal RNA large subunit methyltransferase E (210 aa).

Residues Gly60, Trp62, Asp85, Asp101, and Asp126 each coordinate S-adenosyl-L-methionine. Lys166 (proton acceptor) is an active-site residue. Basic and acidic residues predominate over residues 191–200 (KPKASRDKSS). Positions 191–210 (KPKASRDKSSETFLVARDLK) are disordered.

It belongs to the class I-like SAM-binding methyltransferase superfamily. RNA methyltransferase RlmE family.

It localises to the cytoplasm. The enzyme catalyses uridine(2552) in 23S rRNA + S-adenosyl-L-methionine = 2'-O-methyluridine(2552) in 23S rRNA + S-adenosyl-L-homocysteine + H(+). Functionally, specifically methylates the uridine in position 2552 of 23S rRNA at the 2'-O position of the ribose in the fully assembled 50S ribosomal subunit. The chain is Ribosomal RNA large subunit methyltransferase E from Bordetella bronchiseptica (strain ATCC BAA-588 / NCTC 13252 / RB50) (Alcaligenes bronchisepticus).